Here is a 623-residue protein sequence, read N- to C-terminus: Heterogeneous nuclear ribonucleoprotein Q (623 aa).

N-acetylalanine is present on A2. Residue S159 is modified to Phosphoserine. 3 RRM domains span residues 162 to 241 (TEIF…ISVA), 243 to 325 (NRLF…WADP), and 338 to 408 (KVLF…FAKP). K168 participates in a covalent cross-link: Glycyl lysine isopeptide (Lys-Gly) (interchain with G-Cter in SUMO2). The residue at position 221 (K221) is an N6-acetyllysine. Position 363 is an N6-acetyllysine (K363). Y373 carries the post-translational modification Phosphotyrosine. Residues 400 to 561 (NIEIVFAKPP…GARGGRGGNV (162 aa)) form an interaction with APOBEC1 region. At R444 the chain carries Asymmetric dimethylarginine; by PRMT1; alternate. R444 is modified (omega-N-methylarginine; by PRMT1; alternate). Repeat copies occupy residues 448 to 450 (RGG), 451 to 453 (RGG), 460 to 464 (YYGYE), 469 to 472 (YYGY), 478 to 480 (RGG), and 485 to 488 (YYGY). Residues 448 to 559 (RGGRGGYGYP…VRGARGGRGG (112 aa)) form an 8 X 3 AA repeats of R-G-G region. Residues 460-488 (YYGYEDYYDYYGYDYHNYRGGYEDPYYGY) form a 3 X 4 AA repeats of Y-Y-G-Y region. R496 carries the omega-N-methylarginine; by PRMT1 modification. The disordered stretch occupies residues 497–623 (GRGGRGARGA…YQDTFGQQWK (127 aa)). The stretch at 498–500 (RGG) is one 1-4 repeat. Positions 504 to 522 (RGAAPSRGRGAAPPRGRAG) are enriched in low complexity. R510 bears the Asymmetric dimethylarginine; by PRMT1 mark. Asymmetric dimethylarginine; by PRMT1; alternate is present on R518. R518 is modified (omega-N-methylarginine; by PRMT1; alternate). The tract at residues 518 to 549 (RGRAGYSQRGGPGSARGVRGARGGAQQQRGRG) is interaction with SMN. R526 carries the asymmetric dimethylarginine; alternate modification. At R526 the chain carries Omega-N-methylarginine; alternate. The 1-5 repeat unit spans residues 526-528 (RGG). Residues R536 and R539 each carry the asymmetric dimethylarginine; by PRMT1; alternate modification. Omega-N-methylarginine; by PRMT1; alternate is present on residues R536 and R539. Repeat copies occupy residues 539–541 (RGG), 554–556 (RGG), and 557–559 (RGG). Residues 550–562 (VRGARGGRGGNVG) show a composition bias toward gly residues. The Bipartite nuclear localization signal motif lies at 564 to 578 (KRKADGYNQPDTKRR). The span at 580 to 595 (TNNQNWGSQPIAQQPL) shows a compositional bias: polar residues. Position 587 is a phosphoserine (S587). A Glycyl lysine isopeptide (Lys-Gly) (interchain with G-Cter in SUMO2) cross-link involves residue K607. Residues 611-623 (QEFYQDTFGQQWK) are compositionally biased toward polar residues.

In terms of assembly, identified in the spliceosome C complex. Component of the coding region determinant (CRD)-mediated complex, composed of DHX9, HNRNPU, IGF2BP1, SYNCRIP and YBX1. Identified in a mRNP complex, at least composed of DHX9, DDX3X, ELAVL1, HNRNPU, IGF2BP1, ILF3, PABPC1, PCBP2, PTBP2, STAU1, STAU2, SYNCRIP and YBX1. Identified in a mRNP granule complex, at least composed of ACTB, ACTN4, DHX9, ERG, HNRNPA1, HNRNPA2B1, HNRNPAB, HNRNPD, HNRNPL, HNRNPR, HNRNPU, HSPA1, HSPA8, IGF2BP1, ILF2, ILF3, NCBP1, NCL, PABPC1, PABPC4, PABPN1, RPLP0, RPS3, RPS3A, RPS4X, RPS8, RPS9, SYNCRIP, YBX1 and untranslated mRNAs. Interacts with GTPBP1. Isoform 1 is a component of the APOB mRNA editosome complex. Isoform 1 interacts with APOBEC1 and A1CF. Part of a complex associated with the FOS mCRD domain and consisting of PABPC1, PAIP1, CSDE1/UNR, HNRPD and SYNCRIP. Isoform 2 interacts with HNRPR. Interacts with POLR2A hyperphosphorylated C-terminal domain. Interacts with HABP4. Identified in a histone pre-mRNA complex, at least composed of ERI1, LSM11, SLBP, SNRPB, SYNCRIP and YBX1. Isoform 1 and isoform 2 interact with SMN. Isoform 2 interacts through its C-terminal domain with SYT7, SYT8 and SYT9. The non-phosphorylated and phosphorylated forms are colocalized with PAIP1 in polysomes. Phosphorylated on tyrosine. The membrane-bound form found in microsomes is phosphorylated in vitro by insulin receptor tyrosine kinase (INSR). Phosphorylation is inhibited upon binding to RNA, whereas the cytoplasmic form is poorly phosphorylated. As to expression, ubiquitous. Detected in heart, brain, spleen, lung, liver, skeletal muscle, adipocytes, kidney and testis.

It is found in the nucleus. The protein localises to the nucleoplasm. It localises to the microsome. The protein resides in the cytoplasm. In terms of biological role, heterogeneous nuclear ribonucleoprotein (hnRNP) implicated in mRNA processing mechanisms. Component of the CRD-mediated complex that promotes MYC mRNA stability. Isoform 1 and isoform 2 are associated in vitro with pre-mRNA, splicing intermediates and mature mRNA protein complexes. Isoform 1 binds to apoB mRNA AU-rich sequences. Isoform 1 is part of the APOB mRNA editosome complex and may modulate the postranscriptional C to U RNA-editing of the APOB mRNA through either by binding to A1CF (APOBEC1 complementation factor), to APOBEC1 or to RNA itself. May be involved in translationally coupled mRNA turnover. Implicated with other RNA-binding proteins in the cytoplasmic deadenylation/translational and decay interplay of the FOS mRNA mediated by the major coding-region determinant of instability (mCRD) domain. Interacts in vitro preferentially with poly(A) and poly(U) RNA sequences. Isoform 2 may be involved in cytoplasmic vesicle-based mRNA transport through interaction with synaptotagmins. The chain is Heterogeneous nuclear ribonucleoprotein Q (Syncrip) from Mus musculus (Mouse).